The primary structure comprises 914 residues: Solute carrier family 12 member 9 (914 aa).

At 1-36 (MASESSPLLAYRLLGEEGAAFPPNGAGVSGVPSSRK) the chain is on the cytoplasmic side. Serine 6 is modified (phosphoserine). Residues 37 to 57 (LSTFLGVVVPTVLSMFSIVVF) form a helical membrane-spanning segment. At 58 to 72 (LRIGFVVGHAGLLQA) the chain is on the extracellular side. Residues 73–93 (LAMLLVAYIILALTVLSVCAI) form a helical membrane-spanning segment. At 94-119 (ATNGAVRGGGAYFMISRTLGPEVGGS) the chain is on the cytoplasmic side. A helical transmembrane segment spans residues 120–140 (IGLMFYLANVCGCAVSLLGLV). At 141–167 (ESILDVFGADATGSSGIQVLPQGYGWN) the chain is on the extracellular side. Residues 168-188 (LLYGSLLLGLVGGVCTLGAGL) form a helical membrane-spanning segment. At 189-193 (YARAS) the chain is on the cytoplasmic side. The chain crosses the membrane as a helical span at residues 194–214 (FLTFLLVSGSLASVLVSFVAV). The Extracellular segment spans residues 215 to 262 (GPRNIPLAPRPGTNASSVPHRHGHFTGFNGSTLRDNLGAGYAEDYTTG). N-linked (GlcNAc...) asparagine glycosylation is found at asparagine 228 and asparagine 243. Residues 263 to 283 (AMMTFASVFAVLFNGCTGIMA) form a helical membrane-spanning segment. The Cytoplasmic portion of the chain corresponds to 284–297 (GANMSGELKDPSRA). A helical membrane pass occupies residues 298-318 (IPLGTIIAVAYTFFIYILLFF). The Extracellular portion of the chain corresponds to 319–338 (LSSFTCDRALLQEDYGFFRD). A helical membrane pass occupies residues 339–359 (ISLWPPLVLIGIYATALSASM). Topologically, residues 360-376 (SSLIGASRILHALAQDD) are cytoplasmic. The helical transmembrane segment at 377–399 (LFGVILAPAKVVSGGGNPWGAVL) threads the bilayer. Residues 400–416 (YSWGLVQLVLLAGKLNT) are Extracellular-facing. Residues 417–437 (LAAVVTVFYLVAYAAVDLSCL) form a helical membrane-spanning segment. The Cytoplasmic portion of the chain corresponds to 438–466 (SLEWASAPNFRPTFSLFSWHTCLLGVASC). The helical transmembrane segment at 467 to 487 (LLMMFLISPGAAGGSLLLMGL) threads the bilayer. Over 488–740 (LSALLTARGG…LLRPRGGPGY (253 aa)) the chain is Extracellular. The tract at residues 645–678 (PAFSEPAEGTREGGSPALSTLFPPPRAPGSPRAL) is disordered. A helical membrane pass occupies residues 741-761 (VDVCGLFLLQMATILSMVPAW). The Cytoplasmic portion of the chain corresponds to 762-914 (HSARLRIFLC…GVTPVTCTDL (153 aa)). The interval 844-864 (QGRGTVGGPGGPEGRDGEEGP) is disordered.

This sequence belongs to the SLC12A transporter family. As to quaternary structure, interacts with SLC12A1.

Its subcellular location is the cell membrane. It localises to the lysosome membrane. Its function is as follows. May be an inhibitor of SLC12A1. Seems to correspond to a subunit of a multimeric transport system and thus, additional subunits may be required for its function. May play a role in lysosomal ion flux and osmoregulation. In Mus musculus (Mouse), this protein is Solute carrier family 12 member 9 (Slc12a9).